The sequence spans 99 residues: uncharacterized protein (99 aa).

Residues 1–17 (MMMNAFFPAMALMVLVG) form the signal peptide. Cys-18 is lipidated: N-palmitoyl cysteine. A lipid anchor (S-diacylglycerol cysteine) is attached at Cys-18.

It localises to the cell membrane. This is an uncharacterized protein from Shigella boydii serotype 4 (strain Sb227).